The sequence spans 185 residues: Threonylcarbamoyl-AMP synthase (185 aa).

The 182-residue stretch at 4–185 folds into the YrdC-like domain; the sequence is SFRAQCAARV…LVTGQVIRPA (182 aa).

This sequence belongs to the SUA5 family. TsaC subfamily.

The protein localises to the cytoplasm. The catalysed reaction is L-threonine + hydrogencarbonate + ATP = L-threonylcarbamoyladenylate + diphosphate + H2O. Functionally, required for the formation of a threonylcarbamoyl group on adenosine at position 37 (t(6)A37) in tRNAs that read codons beginning with adenine. Catalyzes the conversion of L-threonine, HCO(3)(-)/CO(2) and ATP to give threonylcarbamoyl-AMP (TC-AMP) as the acyladenylate intermediate, with the release of diphosphate. This is Threonylcarbamoyl-AMP synthase from Pseudomonas aeruginosa (strain UCBPP-PA14).